A 476-amino-acid chain; its full sequence is Bifunctional protein HldE (476 aa).

The interval 1–318 (MKPTLPNYDQ…AEAIHGSQDS (318 aa)) is ribokinase. Residue 195 to 198 (NMLE) participates in ATP binding. Asp264 is a catalytic residue. The tract at residues 344–476 (MTNGCFDILH…IIEAIKGGRG (133 aa)) is cytidylyltransferase.

The protein in the N-terminal section; belongs to the carbohydrate kinase PfkB family. In the C-terminal section; belongs to the cytidylyltransferase family. In terms of assembly, homodimer.

It catalyses the reaction D-glycero-beta-D-manno-heptose 7-phosphate + ATP = D-glycero-beta-D-manno-heptose 1,7-bisphosphate + ADP + H(+). It carries out the reaction D-glycero-beta-D-manno-heptose 1-phosphate + ATP + H(+) = ADP-D-glycero-beta-D-manno-heptose + diphosphate. The protein operates within nucleotide-sugar biosynthesis; ADP-L-glycero-beta-D-manno-heptose biosynthesis; ADP-L-glycero-beta-D-manno-heptose from D-glycero-beta-D-manno-heptose 7-phosphate: step 1/4. Its pathway is nucleotide-sugar biosynthesis; ADP-L-glycero-beta-D-manno-heptose biosynthesis; ADP-L-glycero-beta-D-manno-heptose from D-glycero-beta-D-manno-heptose 7-phosphate: step 3/4. Catalyzes the phosphorylation of D-glycero-D-manno-heptose 7-phosphate at the C-1 position to selectively form D-glycero-beta-D-manno-heptose-1,7-bisphosphate. Functionally, catalyzes the ADP transfer from ATP to D-glycero-beta-D-manno-heptose 1-phosphate, yielding ADP-D-glycero-beta-D-manno-heptose. The chain is Bifunctional protein HldE from Aliivibrio fischeri (strain MJ11) (Vibrio fischeri).